Reading from the N-terminus, the 237-residue chain is Ribonuclease 3 (237 aa).

In terms of domain architecture, RNase III spans 5 to 136; the sequence is VDELSARLGV…VIAALFLDQG (132 aa). E49 contacts Mg(2+). D53 is a catalytic residue. Residues D122 and E125 each coordinate Mg(2+). E125 is an active-site residue. The DRBM domain maps to 163-232; the sequence is DYKSRLQARI…ARAALDALEG (70 aa). The span at 185–208 shows a compositional bias: basic and acidic residues; that stretch reads IDRSGPEHRPEFTVEVRAGEERLG. The disordered stretch occupies residues 185-237; the sequence is IDRSGPEHRPEFTVEVRAGEERLGTGKGPSKQAAEQAAARAALDALEGGTDGR. Positions 216 to 231 are enriched in low complexity; that stretch reads QAAEQAAARAALDALE.

This sequence belongs to the ribonuclease III family. As to quaternary structure, homodimer. Mg(2+) serves as cofactor.

Its subcellular location is the cytoplasm. The enzyme catalyses Endonucleolytic cleavage to 5'-phosphomonoester.. Digests double-stranded RNA. Involved in the processing of primary rRNA transcript to yield the immediate precursors to the large and small rRNAs (23S and 16S). Processes some mRNAs, and tRNAs when they are encoded in the rRNA operon. Processes pre-crRNA and tracrRNA of type II CRISPR loci if present in the organism. This chain is Ribonuclease 3, found in Roseiflexus sp. (strain RS-1).